Reading from the N-terminus, the 149-residue chain is D-aminoacyl-tRNA deacylase (149 aa).

The Gly-cisPro motif, important for rejection of L-amino acids motif lies at 137–138; the sequence is GP.

The protein belongs to the DTD family. Homodimer.

It localises to the cytoplasm. The catalysed reaction is glycyl-tRNA(Ala) + H2O = tRNA(Ala) + glycine + H(+). It carries out the reaction a D-aminoacyl-tRNA + H2O = a tRNA + a D-alpha-amino acid + H(+). Functionally, an aminoacyl-tRNA editing enzyme that deacylates mischarged D-aminoacyl-tRNAs. Also deacylates mischarged glycyl-tRNA(Ala), protecting cells against glycine mischarging by AlaRS. Acts via tRNA-based rather than protein-based catalysis; rejects L-amino acids rather than detecting D-amino acids in the active site. By recycling D-aminoacyl-tRNA to D-amino acids and free tRNA molecules, this enzyme counteracts the toxicity associated with the formation of D-aminoacyl-tRNA entities in vivo and helps enforce protein L-homochirality. The protein is D-aminoacyl-tRNA deacylase of Desulfitobacterium hafniense (strain DSM 10664 / DCB-2).